Here is a 625-residue protein sequence, read N- to C-terminus: MAATMNKTPATTFLLIPAAASLVLLLAAAASVEASAFDYAGAFDKCLLFFEAQRSGKLPDDRLVRWRGDSALTDGFSQGVDLVGGYYDSGDHVKFGLPMAYAVTMLSWGVVEFEKEMVDGNKLHRVLDAIRWGTNYFVKAHTQHNALWVQVGDGDSDHLCWERAEDMSTPRTAFKIDINNPGSEVAGETAAALAAAAKAFKPYDRMYSDLLLLHSKQLFTFADTFRGKYDDSLQSAKKFYPSASGYQDELLWAAAWLYEATGDEQYLRYVSQNAEAFGGTGWAVTEFSWDNKYAGLQVLLSKVLFEQGGSAAGYADTLKQYQAKAEFFLCACLQKNNGHNVKMTPGGLMYVSDWSNMQYVSSSAFLLTVYADYLAESRGTLRCPDGEVKPAEILLFARSQVDYVLGKNPKGMSYMVGYGSYYPTHVHHRGASIPSIYAMNATVGCMEGFDKYYNSKNADPNVLHGALVGGPDANDAYDDDRCNYQHAEPTLAGNAPMSGVFARLAASPADNTPEYTPAPNAPSPSNGGSPLEFVHTVTNTWKANGVDYYRHVVTAKNTCGHAITYLKLQIKELSGEIYGVSRTNAKDMYEFPSWMTRLDAGAQLTIVYIQGGPAAKIAVVEYKTA.

Positions 1–34 (MAATMNKTPATTFLLIPAAASLVLLLAAAASVEA) are cleaved as a signal peptide. D91 serves as the catalytic Nucleophile. H427 is an active-site residue. A glycan (N-linked (GlcNAc...) asparagine) is linked at N440. Active-site residues include D479 and E488. Positions 509 to 530 (ADNTPEYTPAPNAPSPSNGGSP) are disordered.

This sequence belongs to the glycosyl hydrolase 9 (cellulase E) family.

The protein resides in the secreted. It carries out the reaction Endohydrolysis of (1-&gt;4)-beta-D-glucosidic linkages in cellulose, lichenin and cereal beta-D-glucans.. The sequence is that of Endoglucanase 13 (GLU6) from Oryza sativa subsp. indica (Rice).